We begin with the raw amino-acid sequence, 179 residues long: MSKTLQSFNLLKWIDENKELLKPPVNNKVIWQDSEFIAMILGGPNRRRDFHVDPSDEFFYQIKGECYVECITEEGKREVVTVKEGDVFMLPAMVPHSPHRVANTYGLVIERKRSQGELEDFVWFCDECNHEMHRVRVQLSDIEKQVKEAIHSFNSNKEIRACKNCGHIMPEEVGEWKCE.

O2 is bound at residue Arg-47. Residues His-51, Glu-57, and His-96 each contribute to the Fe cation site. Glu-57 is a substrate binding site. Substrate contacts are provided by Arg-100 and Glu-110. The Fe cation site is built by Cys-125, Cys-128, Cys-162, and Cys-165.

It belongs to the 3-HAO family. It depends on Fe(2+) as a cofactor.

It catalyses the reaction 3-hydroxyanthranilate + O2 = (2Z,4Z)-2-amino-3-carboxymuconate 6-semialdehyde. Its pathway is cofactor biosynthesis; NAD(+) biosynthesis; quinolinate from L-kynurenine: step 3/3. Catalyzes the oxidative ring opening of 3-hydroxyanthranilate to 2-amino-3-carboxymuconate semialdehyde, which spontaneously cyclizes to quinolinate. In Bacillus thuringiensis (strain Al Hakam), this protein is 3-hydroxyanthranilate 3,4-dioxygenase.